A 279-amino-acid polypeptide reads, in one-letter code: Putative short-chain type dehydrogenase/reductase MSMEG_6031/MSMEI_5872 (279 aa).

Residue 11–33 participates in NAD(+) binding; sequence FITGAARGQGRSHAVRLAEEGAD. Residue K65 forms an Isoglutamyl lysine isopeptide (Lys-Gln) (interchain with Q-Cter in protein Pup) linkage. Position 158 (S158) interacts with substrate. Y171 functions as the Proton acceptor in the catalytic mechanism.

It belongs to the short-chain dehydrogenases/reductases (SDR) family.

The sequence is that of Putative short-chain type dehydrogenase/reductase MSMEG_6031/MSMEI_5872 from Mycolicibacterium smegmatis (strain ATCC 700084 / mc(2)155) (Mycobacterium smegmatis).